The following is a 447-amino-acid chain: UPF0210 protein Lreu_0940 (447 aa).

This sequence belongs to the UPF0210 family. Homodimer.

The protein is UPF0210 protein Lreu_0940 of Limosilactobacillus reuteri (strain DSM 20016) (Lactobacillus reuteri).